We begin with the raw amino-acid sequence, 357 residues long: MSKSKSSRSTDIIDIYAKPDIKLKVLEPRQDRELRVELEGRSINHAIVNAVRRSVMLYVPIYGFHRSNIHIELNKFKNMYNFDLMYNIFETLPIFDVPNFMDLIDPDVYLPVELSKNLFGRFVQEQYTEQSDQEDKLVDATKKLFKIELTLNYKNNTADDKYISSHDCVIKIDGKTSDGYLKRRPICLFVLKPSEEISLRAEANLGIAKNFAAYEATTNAIHEEKNPNKYVITYKTLEQLNKYVILNKACTIIYKKLENLQDYLLRTYTEDRDPTEQIDIELYGEDHTLGTILENVLQQCEYVEKAGYCMPHLLIDKILVSYKLYDDSEIGPIKVLNDCITYLIKLYKQLADLVPKK.

This sequence belongs to the archaeal Rpo11/eukaryotic RPB11/RPC19 RNA polymerase subunit family.

It is found in the virion. The catalysed reaction is RNA(n) + a ribonucleoside 5'-triphosphate = RNA(n+1) + diphosphate. The sequence is that of Putative DNA directed RNA polymerase subunit R470 from Acanthamoeba polyphaga mimivirus (APMV).